Consider the following 283-residue polypeptide: ATP phosphoribosyltransferase (283 aa).

The protein belongs to the ATP phosphoribosyltransferase family. Long subfamily. Mg(2+) is required as a cofactor.

It is found in the cytoplasm. It carries out the reaction 1-(5-phospho-beta-D-ribosyl)-ATP + diphosphate = 5-phospho-alpha-D-ribose 1-diphosphate + ATP. It participates in amino-acid biosynthesis; L-histidine biosynthesis; L-histidine from 5-phospho-alpha-D-ribose 1-diphosphate: step 1/9. With respect to regulation, feedback inhibited by histidine. Functionally, catalyzes the condensation of ATP and 5-phosphoribose 1-diphosphate to form N'-(5'-phosphoribosyl)-ATP (PR-ATP). Has a crucial role in the pathway because the rate of histidine biosynthesis seems to be controlled primarily by regulation of HisG enzymatic activity. The protein is ATP phosphoribosyltransferase of Bacteroides fragilis (strain ATCC 25285 / DSM 2151 / CCUG 4856 / JCM 11019 / LMG 10263 / NCTC 9343 / Onslow / VPI 2553 / EN-2).